The sequence spans 186 residues: NADH-quinone oxidoreductase subunit B (186 aa).

[4Fe-4S] cluster is bound by residues Cys44, Cys45, Cys110, and Cys139.

This sequence belongs to the complex I 20 kDa subunit family. As to quaternary structure, NDH-1 is composed of 14 different subunits. Subunits NuoB, C, D, E, F, and G constitute the peripheral sector of the complex. [4Fe-4S] cluster serves as cofactor.

Its subcellular location is the cell inner membrane. It catalyses the reaction a quinone + NADH + 5 H(+)(in) = a quinol + NAD(+) + 4 H(+)(out). In terms of biological role, NDH-1 shuttles electrons from NADH, via FMN and iron-sulfur (Fe-S) centers, to quinones in the respiratory chain. The immediate electron acceptor for the enzyme in this species is believed to be ubiquinone. Couples the redox reaction to proton translocation (for every two electrons transferred, four hydrogen ions are translocated across the cytoplasmic membrane), and thus conserves the redox energy in a proton gradient. The chain is NADH-quinone oxidoreductase subunit B from Leptospira borgpetersenii serovar Hardjo-bovis (strain JB197).